The primary structure comprises 179 residues: Large ribosomal subunit protein uL5 (179 aa).

Belongs to the universal ribosomal protein uL5 family. As to quaternary structure, part of the 50S ribosomal subunit; part of the 5S rRNA/L5/L18/L25 subcomplex. Contacts the 5S rRNA and the P site tRNA. Forms a bridge to the 30S subunit in the 70S ribosome.

Its function is as follows. This is one of the proteins that bind and probably mediate the attachment of the 5S RNA into the large ribosomal subunit, where it forms part of the central protuberance. In the 70S ribosome it contacts protein S13 of the 30S subunit (bridge B1b), connecting the 2 subunits; this bridge is implicated in subunit movement. Contacts the P site tRNA; the 5S rRNA and some of its associated proteins might help stabilize positioning of ribosome-bound tRNAs. The polypeptide is Large ribosomal subunit protein uL5 (Desulfitobacterium hafniense (strain Y51)).